Here is a 147-residue protein sequence, read N- to C-terminus: Large ribosomal subunit protein uL13 (147 aa).

The protein belongs to the universal ribosomal protein uL13 family. Part of the 50S ribosomal subunit.

Its function is as follows. This protein is one of the early assembly proteins of the 50S ribosomal subunit, although it is not seen to bind rRNA by itself. It is important during the early stages of 50S assembly. The sequence is that of Large ribosomal subunit protein uL13 from Beutenbergia cavernae (strain ATCC BAA-8 / DSM 12333 / CCUG 43141 / JCM 11478 / NBRC 16432 / NCIMB 13614 / HKI 0122).